The following is a 467-amino-acid chain: Acid phosphatase PHO12 (467 aa).

A signal peptide spans 1–17; that stretch reads MLKSAVYSILAASLVNA. The active-site Nucleophile is the H75. N97, N162, N192, N250, and N315 each carry an N-linked (GlcNAc...) asparagine glycan. D338 functions as the Proton donor in the catalytic mechanism. N-linked (GlcNAc...) asparagine glycosylation is found at N356, N390, N439, N445, and N461.

This sequence belongs to the histidine acid phosphatase family. Glycosylated during secretion across the membrane.

The enzyme catalyses a phosphate monoester + H2O = an alcohol + phosphate. In Saccharomyces cerevisiae (strain ATCC 204508 / S288c) (Baker's yeast), this protein is Acid phosphatase PHO12 (PHO12).